The following is a 72-amino-acid chain: Teretoxin Tan11.1 (72 aa).

An N-terminal signal peptide occupies residues 1–21 (MLATKMSVTFCFLLMLTTVML). The propeptide occupies 22–31 (PTEAKTVAGR).

This sequence belongs to the teretoxin H (TH) superfamily. In terms of processing, contains 4 disulfide bonds. In terms of tissue distribution, expressed by the venom duct.

The protein localises to the secreted. The chain is Teretoxin Tan11.1 from Terebra anilis (Auger snail).